A 550-amino-acid chain; its full sequence is MTPADLAELLKTTATAVLSEHALDTSALPQTVVVERPRNPEHGDYASNVALQLAKKVGANPRELAGWIVEALTKADGIASAEVAGPGFINLRLETSAQAKIVNAIIDAGSGFGHSELMAAHKVNLEFVSANPTGPIHIGGTRWAAVGDALGRLLSTQGADVVREYYFNDHGAQIDRFANSLIAAAKGEPTPDDGYAGSYINDIAARVLQKAPDALSLPDAQMHETFREIGVDLMFSHIKESLHEFGTDFDVYTHEDSMHSTGRVDQAVARLRETGNIYEKDGATWLRSSSFGDDKDRVVIKSDDKPAYIAGDLAYYLDKRERGFDLCIYMLGADHHGYIARLKAAAAAFGEDPGTVEVLIGQMVNLVRDGQPVRMSKRTGTVITLDDLVEAIGVDAARYSLIRSSVDTPIDIDLALWSSASNENPVYYVQYAHARLSALARNAAELGLIPDTDHLELLSHEKEGVLLRTLGDFPRMLKAAASLREPHRVCRYLEDLAGDYHRFYDSCRVLPQGDEEPTQLHTARLALCQATRQAIANGLGILGVTAPERM.

Positions 130–140 (ANPTGPIHIGG) match the 'HIGH' region motif.

This sequence belongs to the class-I aminoacyl-tRNA synthetase family. Monomer.

The protein resides in the cytoplasm. It catalyses the reaction tRNA(Arg) + L-arginine + ATP = L-arginyl-tRNA(Arg) + AMP + diphosphate. The polypeptide is Arginine--tRNA ligase (Mycobacterium ulcerans (strain Agy99)).